A 158-amino-acid chain; its full sequence is Cytochrome b562 (158 aa).

Helical transmembrane passes span 12 to 32 (ITLHWAIAGLVLFNYIFGETM), 46 to 66 (AGVGHYLHVVVGLAVLVLTLV), 87 to 107 (VAAGLQGLLYLLTLLVPALGM), and 121 to 141 (HVLAANAIMLLALVHAVSALF). The heme b site is built by H15 and H53. The heme b site is built by H121 and H135.

Belongs to the cytochrome b561 family. Homodimer. It depends on heme b as a cofactor.

The protein localises to the cell membrane. Its function is as follows. Cytochrome b562 is an integral component of the cytochrome b-c1 complex in the cyclic electron transfer system of photosynthetic bacteria. The polypeptide is Cytochrome b562 (Cereibacter sphaeroides (strain ATCC 17023 / DSM 158 / JCM 6121 / CCUG 31486 / LMG 2827 / NBRC 12203 / NCIMB 8253 / ATH 2.4.1.) (Rhodobacter sphaeroides)).